A 63-amino-acid chain; its full sequence is Large ribosomal subunit protein uL29 (63 aa).

The protein belongs to the universal ribosomal protein uL29 family.

The sequence is that of Large ribosomal subunit protein uL29 from Shewanella oneidensis (strain ATCC 700550 / JCM 31522 / CIP 106686 / LMG 19005 / NCIMB 14063 / MR-1).